The following is a 392-amino-acid chain: Obg-like ATPase 1 (392 aa).

Residues 21 to 285 (LKTGIVGMPN…FTEEEAIEEC (265 aa)) enclose the OBG-type G domain. 30 to 35 (NVGKST) provides a ligand contact to ATP. Mg(2+)-binding residues include Ser-34 and Thr-55. Residue Met-233 coordinates ATP. The region spanning 306–389 (NLINYFTCGE…ESGDIAHWKA (84 aa)) is the TGS domain.

It belongs to the TRAFAC class OBG-HflX-like GTPase superfamily. OBG GTPase family. YchF/OLA1 subfamily. Monomer. Requires Mg(2+) as cofactor.

The protein localises to the cytoplasm. It localises to the nucleus. In terms of biological role, hydrolyzes ATP, and can also hydrolyze GTP with lower efficiency. Has lower affinity for GTP. Negatively regulates the G2/M transition in the cell cycle. In Schizosaccharomyces pombe (strain 972 / ATCC 24843) (Fission yeast), this protein is Obg-like ATPase 1.